A 111-amino-acid chain; its full sequence is V-type proton ATPase subunit G 2 (111 aa).

Belongs to the V-ATPase G subunit family. V-ATPase is a heteromultimeric enzyme composed of a peripheral catalytic V1 complex (components A to H) attached to an integral membrane V0 proton pore complex (components: a, c, c', c'' and d).

Functionally, catalytic subunit of the peripheral V1 complex of vacuolar ATPase (V-ATPase). V-ATPase is responsible for acidifying a variety of intracellular compartments in eukaryotic cells. This chain is V-type proton ATPase subunit G 2 (VATG2), found in Nicotiana tabacum (Common tobacco).